We begin with the raw amino-acid sequence, 189 residues long: Peptidyl-tRNA hydrolase (189 aa).

Y14 is a tRNA binding site. H19 acts as the Proton acceptor in catalysis. Positions 64, 66, and 112 each coordinate tRNA.

This sequence belongs to the PTH family. In terms of assembly, monomer.

The protein localises to the cytoplasm. The enzyme catalyses an N-acyl-L-alpha-aminoacyl-tRNA + H2O = an N-acyl-L-amino acid + a tRNA + H(+). In terms of biological role, hydrolyzes ribosome-free peptidyl-tRNAs (with 1 or more amino acids incorporated), which drop off the ribosome during protein synthesis, or as a result of ribosome stalling. Functionally, catalyzes the release of premature peptidyl moieties from peptidyl-tRNA molecules trapped in stalled 50S ribosomal subunits, and thus maintains levels of free tRNAs and 50S ribosomes. The chain is Peptidyl-tRNA hydrolase from Clostridium botulinum (strain 657 / Type Ba4).